Reading from the N-terminus, the 92-residue chain is Small ribosomal subunit protein uS19 (92 aa).

This sequence belongs to the universal ribosomal protein uS19 family.

In terms of biological role, protein S19 forms a complex with S13 that binds strongly to the 16S ribosomal RNA. This Malacoplasma penetrans (strain HF-2) (Mycoplasma penetrans) protein is Small ribosomal subunit protein uS19.